The sequence spans 274 residues: Formamidopyrimidine-DNA glycosylase (274 aa).

The active-site Schiff-base intermediate with DNA is proline 2. Glutamate 3 functions as the Proton donor in the catalytic mechanism. Lysine 58 acts as the Proton donor; for beta-elimination activity in catalysis. DNA-binding residues include histidine 91 and arginine 110. The FPG-type zinc-finger motif lies at glutamine 238–arginine 272. Residue arginine 262 is the Proton donor; for delta-elimination activity of the active site.

Belongs to the FPG family. Monomer. Zn(2+) is required as a cofactor.

It carries out the reaction Hydrolysis of DNA containing ring-opened 7-methylguanine residues, releasing 2,6-diamino-4-hydroxy-5-(N-methyl)formamidopyrimidine.. The catalysed reaction is 2'-deoxyribonucleotide-(2'-deoxyribose 5'-phosphate)-2'-deoxyribonucleotide-DNA = a 3'-end 2'-deoxyribonucleotide-(2,3-dehydro-2,3-deoxyribose 5'-phosphate)-DNA + a 5'-end 5'-phospho-2'-deoxyribonucleoside-DNA + H(+). Involved in base excision repair of DNA damaged by oxidation or by mutagenic agents. Acts as a DNA glycosylase that recognizes and removes damaged bases. Has a preference for oxidized purines, such as 7,8-dihydro-8-oxoguanine (8-oxoG). Has AP (apurinic/apyrimidinic) lyase activity and introduces nicks in the DNA strand. Cleaves the DNA backbone by beta-delta elimination to generate a single-strand break at the site of the removed base with both 3'- and 5'-phosphates. This is Formamidopyrimidine-DNA glycosylase from Streptococcus pneumoniae serotype 4 (strain ATCC BAA-334 / TIGR4).